Here is a 99-residue protein sequence, read N- to C-terminus: Thylakoid membrane protein ssl2009 (99 aa).

Residues 10 to 30 (GFLLGTVIGGVVGGILGSVLA) traverse the membrane as a helical segment. The stretch at 50–84 (NLDSEENIELARRRLEDKIAQLNLVIDDVRDQLGH) forms a coiled coil.

The protein resides in the cellular thylakoid membrane. In Synechocystis sp. (strain ATCC 27184 / PCC 6803 / Kazusa), this protein is Thylakoid membrane protein ssl2009.